The sequence spans 564 residues: CTP synthase (564 aa).

The interval 1–265 (MTKFVFVTGG…DEIVCHRLDI (265 aa)) is amidoligase domain. S13 contacts CTP. Position 13 (S13) interacts with UTP. Residues 14 to 19 (SLGKGI) and D71 each bind ATP. D71 and E139 together coordinate Mg(2+). Residues 146–148 (DIE), 186–191 (KTKPTQ), and K222 each bind CTP. UTP is bound by residues 186–191 (KTKPTQ) and K222. In terms of domain architecture, Glutamine amidotransferase type-1 spans 290 to 543 (SIALVGKYVD…IQAAISFAGQ (254 aa)). G351 is a binding site for L-glutamine. C378 functions as the Nucleophile; for glutamine hydrolysis in the catalytic mechanism. Residues 379-382 (LGMQ), E402, and R469 contribute to the L-glutamine site. Active-site residues include H516 and E518.

This sequence belongs to the CTP synthase family. In terms of assembly, homotetramer.

It carries out the reaction UTP + L-glutamine + ATP + H2O = CTP + L-glutamate + ADP + phosphate + 2 H(+). It catalyses the reaction L-glutamine + H2O = L-glutamate + NH4(+). The catalysed reaction is UTP + NH4(+) + ATP = CTP + ADP + phosphate + 2 H(+). It participates in pyrimidine metabolism; CTP biosynthesis via de novo pathway; CTP from UDP: step 2/2. With respect to regulation, allosterically activated by GTP, when glutamine is the substrate; GTP has no effect on the reaction when ammonia is the substrate. The allosteric effector GTP functions by stabilizing the protein conformation that binds the tetrahedral intermediate(s) formed during glutamine hydrolysis. Inhibited by the product CTP, via allosteric rather than competitive inhibition. Its function is as follows. Catalyzes the ATP-dependent amination of UTP to CTP with either L-glutamine or ammonia as the source of nitrogen. Regulates intracellular CTP levels through interactions with the four ribonucleotide triphosphates. The sequence is that of CTP synthase from Nitrosomonas europaea (strain ATCC 19718 / CIP 103999 / KCTC 2705 / NBRC 14298).